We begin with the raw amino-acid sequence, 339 residues long: DnaJ homolog subfamily C member 22 (339 aa).

The TM2 domain occupies Gly-4–Trp-50. Transmembrane regions (helical) follow at residues Leu-5–Leu-25, His-30–Trp-50, Phe-81–Ser-101, Phe-105–Gly-125, Leu-135–Ile-155, Val-185–Ala-205, and Phe-218–Leu-238. A J domain is found at Leu-277–Ser-339.

The protein resides in the membrane. Functionally, may function as a co-chaperone. The polypeptide is DnaJ homolog subfamily C member 22 (Dnajc22) (Mus musculus (Mouse)).